We begin with the raw amino-acid sequence, 158 residues long: Cyclic pyranopterin monophosphate synthase (158 aa).

Substrate is bound by residues Leu-75–His-77 and Met-113–Glu-114. Asp-128 is an active-site residue.

It belongs to the MoaC family. In terms of assembly, homohexamer; trimer of dimers.

It catalyses the reaction (8S)-3',8-cyclo-7,8-dihydroguanosine 5'-triphosphate = cyclic pyranopterin phosphate + diphosphate. The protein operates within cofactor biosynthesis; molybdopterin biosynthesis. Its function is as follows. Catalyzes the conversion of (8S)-3',8-cyclo-7,8-dihydroguanosine 5'-triphosphate to cyclic pyranopterin monophosphate (cPMP). In Ralstonia pickettii (strain 12J), this protein is Cyclic pyranopterin monophosphate synthase.